The primary structure comprises 2208 residues: RNA-directed RNA polymerase L (2208 aa).

Positions 26-284 (KEALLSQVEV…SHAGTTVPEC (259 aa)) are endonuclease. Residues E51, D89, and E102 each contribute to the Mn(2+) site. Residue K115 is part of the active site. A RdRp catalytic domain is found at 1172-1370 (CDMKMAVNNG…FLSSKLNKFV (199 aa)). D1330 lines the Mg(2+) pocket.

This sequence belongs to the Bunyavirales RNA polymerase family. In terms of assembly, homomultimer; the oligomeric structure is essential for the polymerase activity. Interacts with nucleoprotein N. Interacts with protein Z; this interaction inhibits viral transcription and replication, Z partially blocks the product exit tunnel for the releasing nascent RNA product. It depends on Mn(2+) as a cofactor. Mg(2+) serves as cofactor.

It is found in the virion. It localises to the host cytoplasm. It catalyses the reaction RNA(n) + a ribonucleoside 5'-triphosphate = RNA(n+1) + diphosphate. In terms of biological role, RNA-dependent RNA polymerase, which is responsible for the replication and transcription of the viral RNA genome using antigenomic RNA as an intermediate. During transcription, synthesizes subgenomic RNAs and assures their capping by a cap-snatching mechanism, which involves the endonuclease activity cleaving the host capped pre-mRNAs. These short capped RNAs are then used as primers for viral transcription. The 3'-end of subgenomic mRNAs molecules are heterogeneous and not polyadenylated. The replicase function is to direct synthesis of antigenomic and genomic RNA which are encapsidated and non capped. As a consequence of the use of the same enzyme for both transcription and replication, these mechanisms need to be well coordinated. These processes may be regulated by proteins N and Z in a dose-dependent manner. Z protein inhibits the viral polymerase L und thus the viral transcription and RNA synthesis. This chain is RNA-directed RNA polymerase L, found in Hylaeamys megacephalus (Large-headed rice rat).